A 301-amino-acid chain; its full sequence is Epimerase family protein Mb2239 (301 aa).

Belongs to the NAD(P)-dependent epimerase/dehydratase family. SDR39U1 subfamily.

This Mycobacterium bovis (strain ATCC BAA-935 / AF2122/97) protein is Epimerase family protein Mb2239.